Here is a 68-residue protein sequence, read N- to C-terminus: MQIIVRDNNVDQALRALKKKLQREGVYREMKLRRHYEKPSEKRARERAAAVRRARKMERKRMERDGIK.

Positions 35–68 are disordered; that stretch reads HYEKPSEKRARERAAAVRRARKMERKRMERDGIK. Over residues 37–49 the composition is skewed to basic and acidic residues; that stretch reads EKPSEKRARERAA. Residues 50 to 59 show a composition bias toward basic residues; it reads AVRRARKMER.

The protein belongs to the bacterial ribosomal protein bS21 family.

The polypeptide is Small ribosomal subunit protein bS21 (Sphingopyxis alaskensis (strain DSM 13593 / LMG 18877 / RB2256) (Sphingomonas alaskensis)).